We begin with the raw amino-acid sequence, 512 residues long: Histidine ammonia-lyase (512 aa).

Residues 142–144 (ASG) constitute a cross-link (5-imidazolinone (Ala-Gly)). Ser143 is subject to 2,3-didehydroalanine (Ser).

It belongs to the PAL/histidase family. In terms of processing, contains an active site 4-methylidene-imidazol-5-one (MIO), which is formed autocatalytically by cyclization and dehydration of residues Ala-Ser-Gly.

The protein resides in the cytoplasm. The catalysed reaction is L-histidine = trans-urocanate + NH4(+). It participates in amino-acid degradation; L-histidine degradation into L-glutamate; N-formimidoyl-L-glutamate from L-histidine: step 1/3. This chain is Histidine ammonia-lyase, found in Bartonella henselae (strain ATCC 49882 / DSM 28221 / CCUG 30454 / Houston 1) (Rochalimaea henselae).